The following is a 525-amino-acid chain: Vesicular inhibitory amino acid transporter (525 aa).

The Cytoplasmic portion of the chain corresponds to 1–132; the sequence is MATLLRSKLS…WNVTNAIQGM (132 aa). The disordered stretch occupies residues 69–111; that stretch reads PCGDEGAEPPVEGDIHYQRGSGAPLPPSGSKDQVGAGGEFGGH. A helical transmembrane segment spans residues 133-153; that stretch reads FVLGLPYAILHGGYLGLFLII. Residues 154–204 are Lumenal, vesicle-facing; it reads FAAVVCCYTGKILIACLYEENEDGEVVRVRDSYVAIANACCAPRFPTLGGR. At Tyr186 the chain carries 3'-nitrotyrosine. The chain crosses the membrane as a helical span at residues 205–225; it reads VVNVAQIIELVMTCILYVVVS. Over 226-265 the chain is Cytoplasmic; sequence GNLMYNSFPGLPVSQKSWSIIATAVLLPCAFLKNLKAVSK. The chain crosses the membrane as a helical span at residues 266–286; the sequence is FSLLCTLAHFVINILVIAYCL. The Lumenal, vesicle portion of the chain corresponds to 287 to 305; it reads SRARDWAWEKVKFYIDVKK. Residues 306-326 form a helical membrane-spanning segment; that stretch reads FPISIGIIVFSYTSQIFLPSL. The Cytoplasmic segment spans residues 327–341; it reads EGNMQQPSEFHCMMN. The helical transmembrane segment at 342–362 threads the bilayer; that stretch reads WTHIAACVLKGLFALVAYLTW. Topologically, residues 363 to 383 are lumenal, vesicle; it reads ADETKEVITDNLPGSIRAVVN. Residues 384 to 404 traverse the membrane as a helical segment; sequence IFLVAKALLSYPLPFFAAVEV. The Cytoplasmic portion of the chain corresponds to 405-438; that stretch reads LEKSLFQEGSRAFFPACYGGDGRLKSWGLTLRCA. A helical membrane pass occupies residues 439–459; it reads LVVFTLLMAIYVPHFALLMGL. Residues 460-461 lie on the Lumenal, vesicle side of the membrane; the sequence is TG. The chain crosses the membrane as a helical span at residues 462-482; the sequence is SLTGAGLCFLLPSLFHLRLLW. Over 483–489 the chain is Cytoplasmic; it reads RKLLWHQ. The helical transmembrane segment at 490–510 threads the bilayer; the sequence is VFFDVAIFVIGGICSVSGFVH. Residues 511–525 lie on the Lumenal, vesicle side of the membrane; the sequence is SLEGLIEAYRTNAED.

It belongs to the amino acid/polyamine transporter 2 family.

Its subcellular location is the cytoplasmic vesicle membrane. The protein localises to the presynapse. It carries out the reaction 4-aminobutanoate(out) + n H(+)(in) = 4-aminobutanoate(in) + n H(+)(out). It catalyses the reaction glycine(out) + n H(+)(in) = glycine(in) + n H(+)(out). The catalysed reaction is beta-alanine(out) + n H(+)(in) = beta-alanine(in) + n H(+)(out). Functionally, antiporter that exchanges vesicular protons for cytosolic 4-aminobutanoate or to a lesser extend glycine, thus allowing their secretion from nerve terminals. The transport is equally dependent on the chemical and electrical components of the proton gradient. May also transport beta-alanine. Acidification of GABAergic synaptic vesicles is a prerequisite for 4-aminobutanoate uptake. The chain is Vesicular inhibitory amino acid transporter from Macaca fascicularis (Crab-eating macaque).